A 166-amino-acid polypeptide reads, in one-letter code: UPF0561 protein C2orf68 homolog (166 aa).

Residues 32–49 (NQLDRDDYDKKVKQAAKE) show a composition bias toward basic and acidic residues. The disordered stretch occupies residues 32-107 (NQLDRDDYDK…SELEPPGRQL (76 aa)). Low complexity predominate over residues 91–101 (ESSSSGSSELE).

The protein belongs to the UPF0561 family.

The chain is UPF0561 protein C2orf68 homolog from Mus musculus (Mouse).